The chain runs to 97 residues: Aspartyl/glutamyl-tRNA(Asn/Gln) amidotransferase subunit C (97 aa).

Belongs to the GatC family. In terms of assembly, heterotrimer of A, B and C subunits.

The enzyme catalyses L-glutamyl-tRNA(Gln) + L-glutamine + ATP + H2O = L-glutaminyl-tRNA(Gln) + L-glutamate + ADP + phosphate + H(+). The catalysed reaction is L-aspartyl-tRNA(Asn) + L-glutamine + ATP + H2O = L-asparaginyl-tRNA(Asn) + L-glutamate + ADP + phosphate + 2 H(+). Allows the formation of correctly charged Asn-tRNA(Asn) or Gln-tRNA(Gln) through the transamidation of misacylated Asp-tRNA(Asn) or Glu-tRNA(Gln) in organisms which lack either or both of asparaginyl-tRNA or glutaminyl-tRNA synthetases. The reaction takes place in the presence of glutamine and ATP through an activated phospho-Asp-tRNA(Asn) or phospho-Glu-tRNA(Gln). This chain is Aspartyl/glutamyl-tRNA(Asn/Gln) amidotransferase subunit C, found in Prochlorococcus marinus (strain MIT 9515).